A 436-amino-acid polypeptide reads, in one-letter code: Aminotransferase tdiD (436 aa).

4 residues coordinate substrate: arginine 30, tyrosine 86, tyrosine 148, and asparagine 202. Lysine 270 is modified (N6-(pyridoxal phosphate)lysine). A substrate-binding site is contributed by arginine 407.

It belongs to the class-I pyridoxal-phosphate-dependent aminotransferase family. It depends on pyridoxal 5'-phosphate as a cofactor.

The enzyme catalyses 3-phenylpyruvate + L-tryptophan = indole-3-pyruvate + L-phenylalanine. Its pathway is secondary metabolite biosynthesis. In terms of biological role, aminotransferase; part of the gene cluster that mediates the biosynthesis of terrequinone A, an antitumor agent. The first step in the biosynthetic pathway for terrequinone A is formation of indole pyruvic acid (IPA) from L-tryptophan by the aminotransferase tdiD. The nonribosomal peptide synthase tdiA then immediately converts unstable IPA to didemethylasterriquinone D (DDAQ D), via condensation of 2 IPA molecules. The symmetric connectivity of the 2 IPA molecules is thought to arise by head-to-tail dual Claisen condensations facilitated by the TE domain. TdiB then catalyzes reverse prenylation by transferring dimethylallyl diphosphate to carbon atom 2' of DDAQ D, to yield asterriquinone C-1. Finally, tdiC and tdiE enzymes robustly convert asterriquinone C-1 to terrequinone A via a transformation involving regular prenylation at carbon atom 5, which requires elimination of the hydroxy group on C-5. The chain is Aminotransferase tdiD from Emericella nidulans (strain FGSC A4 / ATCC 38163 / CBS 112.46 / NRRL 194 / M139) (Aspergillus nidulans).